The chain runs to 204 residues: Glutathione S-transferase GST-4.5 (204 aa).

In terms of domain architecture, GST N-terminal spans 1-77 (MKLYTKPGAC…YIADTAPLTG (77 aa)). Residues C10, V49, 61–62 (QN), and H102 each bind glutathione. In terms of domain architecture, GST C-terminal spans 83-204 (TARSRAEINR…QAALQAEGLN (122 aa)).

Belongs to the GST superfamily. As to quaternary structure, homodimer.

It localises to the cytoplasm. It catalyses the reaction RX + glutathione = an S-substituted glutathione + a halide anion + H(+). In terms of biological role, conjugation of reduced glutathione to a wide number of exogenous and endogenous hydrophobic electrophiles. In Xanthomonas campestris pv. campestris (strain ATCC 33913 / DSM 3586 / NCPPB 528 / LMG 568 / P 25), this protein is Glutathione S-transferase GST-4.5 (gst).